A 699-amino-acid chain; its full sequence is Elongation factor G (699 aa).

A tr-type G domain is found at 10–292 (DRTRNIGIMA…AVIDYLPSPT (283 aa)). GTP is bound by residues 19–26 (AHIDAGKT), 90–94 (DTPGH), and 144–147 (NKMD).

The protein belongs to the TRAFAC class translation factor GTPase superfamily. Classic translation factor GTPase family. EF-G/EF-2 subfamily.

The protein localises to the cytoplasm. Functionally, catalyzes the GTP-dependent ribosomal translocation step during translation elongation. During this step, the ribosome changes from the pre-translocational (PRE) to the post-translocational (POST) state as the newly formed A-site-bound peptidyl-tRNA and P-site-bound deacylated tRNA move to the P and E sites, respectively. Catalyzes the coordinated movement of the two tRNA molecules, the mRNA and conformational changes in the ribosome. The polypeptide is Elongation factor G (Coxiella burnetii (strain Dugway 5J108-111)).